A 176-amino-acid polypeptide reads, in one-letter code: MVTKPARMYTRITGPAYTRKEFMGGVPYPKITTFIQGNQKKDFEIEMMLVAEEACQIRHTALEAARVSVNRKLLDAAGSDNYFLQIRPYPHQVIREHKMATGAGADRISSGMRAAFGRPVGTAARVYPGQIIMVGRVDRNNAKLLKDALHKASIKLPTPCKVVVTKGSKITESLGI.

This sequence belongs to the universal ribosomal protein uL16 family.

This is Large ribosomal subunit protein uL16 from Picrophilus torridus (strain ATCC 700027 / DSM 9790 / JCM 10055 / NBRC 100828 / KAW 2/3).